The following is a 383-amino-acid chain: Adaptive-response sensory kinase SasA (383 aa).

A Histidine kinase domain is found at 152–365; it reads MVAHELRTPL…CFTFTVPIWQ (214 aa). Position 155 is a phosphohistidine; by autocatalysis (H155).

As to quaternary structure, homooligomerizes. Interacts with KaiC. Participates in the KaiABC clock complex, whose core is composed of a KaiC homohexamer, 6 KaiB and up to 6 KaiA dimers. SasA and KaiB(fs) compete to bind to KaiC.

It catalyses the reaction ATP + protein L-histidine = ADP + protein N-phospho-L-histidine.. Its function is as follows. Member of the two-component regulatory system SasA/RpaA involved in genome-wide circadian gene expression. One of several clock output pathways. Participates in the Kai clock protein complex, the main circadian regulator in cyanobacteria, via its interaction with KaiC. KaiC enhances the autophosphorylation activity of SasA, which then transfers its phosphate group to RpaA to activate it. In addition to its output function, recruits fold-shifted KaiB (KaiB(fs)) to KaiC to cooperatively form the KaiB(6):KaiC(6) complex (independent of SasA kinase activity). Required for robustness of the circadian rhythm of gene expression and is involved in clock output, also required for adaptation to light/dark cycles. In Parasynechococcus marenigrum (strain WH8102), this protein is Adaptive-response sensory kinase SasA.